The following is a 512-amino-acid chain: Ribonuclease Y (512 aa).

Residues 3-23 (FQIILVVIISALVGLVIGFFI) traverse the membrane as a helical segment. Residues 202 to 265 (TVAVIPLPND…EVARLALERL (64 aa)) form the KH domain. The HD domain occupies 328–421 (VLKHSIEVCH…VQAADAISAA (94 aa)).

Belongs to the RNase Y family.

It is found in the cell membrane. Functionally, endoribonuclease that initiates mRNA decay. This Desulforamulus reducens (strain ATCC BAA-1160 / DSM 100696 / MI-1) (Desulfotomaculum reducens) protein is Ribonuclease Y.